The following is a 409-amino-acid chain: NADH-ubiquinone oxidoreductase chain 4 (409 aa).

The next 13 membrane-spanning stretches (helical) occupy residues 10-30 (LWLF…FLIF), 44-64 (SYSF…IVIS), 76-96 (ILVF…LYMF), 98-118 (ELSM…IEKI), 120-140 (SSYY…FVYF), 160-180 (FFIL…HLWL), 194-214 (LLAG…LGSL), 221-241 (VWIL…VFQS), 245-265 (ALAA…LVFI), 271-291 (ISSV…FYLI), 305-325 (FMSS…VVFL), 353-373 (MFVM…FLIT), and 389-409 (VGFS…SVFY).

The protein belongs to the complex I subunit 4 family.

The protein localises to the mitochondrion membrane. The enzyme catalyses a ubiquinone + NADH + 5 H(+)(in) = a ubiquinol + NAD(+) + 4 H(+)(out). Functionally, core subunit of the mitochondrial membrane respiratory chain NADH dehydrogenase (Complex I) that is believed to belong to the minimal assembly required for catalysis. Complex I functions in the transfer of electrons from NADH to the respiratory chain. The immediate electron acceptor for the enzyme is believed to be ubiquinone. The chain is NADH-ubiquinone oxidoreductase chain 4 from Caenorhabditis elegans.